Reading from the N-terminus, the 389-residue chain is Type II methyltransferase M1.ScrFI (389 aa).

The HTH cro/C1-type domain maps to 16–71 (IKEKRLRLNMTQKELADAVGMSKNGDRTIRRWENGETCPSQLEISAILRFPEIAPF). The region spanning 79-387 (YKMIDLFAGI…EKMLEVLEKS (309 aa)) is the SAM-dependent MTase C5-type domain. The active site involves Cys149.

The protein belongs to the class I-like SAM-binding methyltransferase superfamily. C5-methyltransferase family.

The enzyme catalyses a 2'-deoxycytidine in DNA + S-adenosyl-L-methionine = a 5-methyl-2'-deoxycytidine in DNA + S-adenosyl-L-homocysteine + H(+). A methylase, recognizes the double-stranded sequence 5'-CCNGG-3', methylates C-2 on both strands, and protects the DNA from cleavage by the ScrFI endonuclease. This chain is Type II methyltransferase M1.ScrFI (scrFIAM), found in Lactococcus lactis subsp. cremoris (Streptococcus cremoris).